The sequence spans 138 residues: Basic phospholipase A2 homolog Tbo-K49 (138 aa).

An N-terminal signal peptide occupies residues 1-16 (MRTLWIMAVLLVGVEG). 6 disulfides stabilise this stretch: C42-C131, C44-C60, C59-C111, C65-C138, C66-C104, and C91-C102. Residues 121–133 (KKERINTKIFCKK) form an important for membrane-damaging activities in eukaryotes and bacteria; heparin-binding region.

In terms of assembly, monomer. As to expression, expressed by the venom gland.

It is found in the secreted. In terms of biological role, snake venom phospholipase A2 homolog that lacks catalytic activity. It induces local edema. Is myotoxic. A model of myotoxic mechanism has been proposed: an apo Lys49-PLA2 is activated by the entrance of a hydrophobic molecule (e.g. fatty acid) at the hydrophobic channel of the protein leading to a reorientation of a monomer. This reorientation causes a transition between 'inactive' to 'active' states, causing alignment of C-terminal and membrane-docking sites (MDoS) side-by-side and putting the membrane-disruption sites (MDiS) in the same plane, exposed to solvent and in a symmetric position for both monomers. The MDoS region stabilizes the toxin on membrane by the interaction of charged residues with phospholipid head groups. Subsequently, the MDiS region destabilizes the membrane with penetration of hydrophobic residues. This insertion causes a disorganization of the membrane, allowing an uncontrolled influx of ions (i.e. calcium and sodium), and eventually triggering irreversible intracellular alterations and cell death. The chain is Basic phospholipase A2 homolog Tbo-K49 from Craspedocephalus borneensis (Borneo pit viper).